A 314-amino-acid polypeptide reads, in one-letter code: Porphobilinogen deaminase (314 aa).

Residue Cys234 is modified to S-(dipyrrolylmethanemethyl)cysteine.

The protein belongs to the HMBS family. In terms of assembly, monomer. Dipyrromethane serves as cofactor.

It carries out the reaction 4 porphobilinogen + H2O = hydroxymethylbilane + 4 NH4(+). The protein operates within porphyrin-containing compound metabolism; protoporphyrin-IX biosynthesis; coproporphyrinogen-III from 5-aminolevulinate: step 2/4. Functionally, tetrapolymerization of the monopyrrole PBG into the hydroxymethylbilane pre-uroporphyrinogen in several discrete steps. In Mycobacterium marinum (strain ATCC BAA-535 / M), this protein is Porphobilinogen deaminase.